Consider the following 491-residue polypeptide: Protein translocase subunit SecY (491 aa).

The Cytoplasmic portion of the chain corresponds to 1-20; that stretch reads MGWKEAAAPVLTRMPAVERP. Residues 21–47 traverse the membrane as a helical segment; the sequence is EGHVPFRRKMYWTGGVLVLYFFLTNVP. At 48 to 58 the chain is on the extracellular side; it reads LWGIQTAGNDF. The helical intramembrane region spans 59 to 66; it reads FGQFRSLL. A discontinuously helical transmembrane segment spans residues 59 to 87; it reads FGQFRSLLAGGQGTVLQLGIGPIVTASIV. The stretch at 67–78 is an intramembrane region; it reads AGGQGTVLQLGI. Positions 79–87 form an intramembrane region, helical; it reads GPIVTASIV. Residues 88–109 lie on the Cytoplasmic side of the membrane; sequence LQLLGGANLLGLDTDNDPRDQA. Residues 110 to 134 form a helical membrane-spanning segment; the sequence is IYQGLQKFLVGVMVVLTGAPMVFLG. The Extracellular portion of the chain corresponds to 135–152; the sequence is NFLQPSQQLAQSMPGGAF. A helical transmembrane segment spans residues 153 to 177; it reads GVEVLIFAQIAAGGILLLFMDEVIS. The Cytoplasmic segment spans residues 178 to 183; the sequence is KWGVGS. Residues 184–202 form a helical membrane-spanning segment; sequence GIGLFIVAGVSQSLVGGLV. The Extracellular portion of the chain corresponds to 203-244; the sequence is FWEGGVGSQGLLPTWFDIIVGNVSNMPPLLSGSGIEFLLMQA. Residues 245–266 form a helical membrane-spanning segment; sequence GILGLLTTLFIYVVVVYAESVR. The Cytoplasmic segment spans residues 267-291; it reads VEIPLSHARVKGARGRFPVKLIYAS. A helical transmembrane segment spans residues 292-313; the sequence is VLPMILVRALQANIQFLGQILN. Over 314–365 the chain is Extracellular; it reads STLASMPTWLGVYGGNGQVTGGLFYYLAPIYSPNAWMWWTSGATAARWQVLI. The helical transmembrane segment at 366–385 threads the bilayer; the sequence is RIAIDLSFMIIGGAIFAIFW. The Cytoplasmic segment spans residues 386-428; that stretch reads VETADMGPDATARQIQNSGMQIPGFRKNQGVIEKVMERYIPQV. Residues 429–447 form a helical membrane-spanning segment; sequence TVIGGALVGLLAVMANMLG. Over 448-452 the chain is Extracellular; that stretch reads TIGNV. Residues 453–467 traverse the membrane as a helical segment; the sequence is SGTGLLLTISITYKL. Topologically, residues 468–491 are cytoplasmic; sequence YEEIAEEQMMEMHPMMREMFGGGD.

This sequence belongs to the SecY/SEC61-alpha family. In terms of assembly, component of the Sec protein translocase complex. Heterotrimer consisting of alpha (SecY), beta (SecG) and gamma (SecE) subunits. The heterotrimers can form oligomers, although 1 heterotrimer is thought to be able to translocate proteins. Interacts with the ribosome. May interact with SecDF, and other proteins may be involved.

The protein resides in the cell membrane. In terms of biological role, the central subunit of the protein translocation channel SecYEG. Consists of two halves formed by TMs 1-5 and 6-10. These two domains form a lateral gate at the front which open onto the bilayer between TMs 2 and 7, and are clamped together by SecE at the back. The channel is closed by both a pore ring composed of hydrophobic SecY resides and a short helix (helix 2A) on the extracellular side of the membrane which forms a plug. The plug probably moves laterally to allow the channel to open. The ring and the pore may move independently. This chain is Protein translocase subunit SecY, found in Halobacterium salinarum (strain ATCC 700922 / JCM 11081 / NRC-1) (Halobacterium halobium).